The primary structure comprises 203 residues: Interferon type B (203 aa).

A signal peptide spans 1-27; it reads MTANHQSPGMHSILLLLLLPALTTTFS. Intrachain disulfides connect cysteine 28/cysteine 125 and cysteine 57/cysteine 164. 2 N-linked (GlcNAc...) asparagine glycosylation sites follow: asparagine 37 and asparagine 160.

Belongs to the alpha/beta interferon family.

Its subcellular location is the secreted. Has antiviral activities. This Gallus gallus (Chicken) protein is Interferon type B (IFNB).